Here is a 215-residue protein sequence, read N- to C-terminus: UPF0502 protein YceH (215 aa).

At K80 the chain carries N6-acetyllysine.

Belongs to the UPF0502 family.

The sequence is that of UPF0502 protein YceH from Shigella boydii serotype 18 (strain CDC 3083-94 / BS512).